A 121-amino-acid chain; its full sequence is NADH-ubiquinone oxidoreductase chain 3 (121 aa).

3 helical membrane-spanning segments follow: residues 11–31 (ILIF…LSYF), 63–83 (FYLV…LFPW), and 90–110 (ISII…IGFI).

The protein belongs to the complex I subunit 3 family.

The protein resides in the mitochondrion membrane. It catalyses the reaction a ubiquinone + NADH + 5 H(+)(in) = a ubiquinol + NAD(+) + 4 H(+)(out). Core subunit of the mitochondrial membrane respiratory chain NADH dehydrogenase (Complex I) that is believed to belong to the minimal assembly required for catalysis. Complex I functions in the transfer of electrons from NADH to the respiratory chain. The immediate electron acceptor for the enzyme is believed to be ubiquinone. In Chondrus crispus (Carrageen Irish moss), this protein is NADH-ubiquinone oxidoreductase chain 3 (ND3).